A 585-amino-acid polypeptide reads, in one-letter code: Arginine--tRNA ligase (585 aa).

The short motif at 130–140 (ANPTGPMHVGH) is the 'HIGH' region element.

This sequence belongs to the class-I aminoacyl-tRNA synthetase family. In terms of assembly, monomer.

The protein localises to the cytoplasm. It catalyses the reaction tRNA(Arg) + L-arginine + ATP = L-arginyl-tRNA(Arg) + AMP + diphosphate. This is Arginine--tRNA ligase from Methylorubrum extorquens (strain CM4 / NCIMB 13688) (Methylobacterium extorquens).